The primary structure comprises 283 residues: Acetyl-coenzyme A carboxylase carboxyl transferase subunit beta (283 aa).

The CoA carboxyltransferase N-terminal domain maps to 29-283; it reads LWVACPKCQQ…LKLHERGAHY (255 aa). Zn(2+) is bound by residues cysteine 33, cysteine 36, cysteine 51, and cysteine 54. A C4-type zinc finger spans residues 33–54; the sequence is CPKCQQSIYHKDLGYYRTCPVC.

It belongs to the AccD/PCCB family. Acetyl-CoA carboxylase is a heterohexamer composed of biotin carboxyl carrier protein (AccB), biotin carboxylase (AccC) and two subunits each of ACCase subunit alpha (AccA) and ACCase subunit beta (AccD). Zn(2+) serves as cofactor.

It localises to the cytoplasm. The enzyme catalyses N(6)-carboxybiotinyl-L-lysyl-[protein] + acetyl-CoA = N(6)-biotinyl-L-lysyl-[protein] + malonyl-CoA. The protein operates within lipid metabolism; malonyl-CoA biosynthesis; malonyl-CoA from acetyl-CoA: step 1/1. Functionally, component of the acetyl coenzyme A carboxylase (ACC) complex. Biotin carboxylase (BC) catalyzes the carboxylation of biotin on its carrier protein (BCCP) and then the CO(2) group is transferred by the transcarboxylase to acetyl-CoA to form malonyl-CoA. The polypeptide is Acetyl-coenzyme A carboxylase carboxyl transferase subunit beta (Latilactobacillus sakei subsp. sakei (strain 23K) (Lactobacillus sakei subsp. sakei)).